The following is a 154-amino-acid chain: Myoglobin (154 aa).

The 147-residue stretch at 2–148 (GLSDGEWQLV…FRKDIAAKYK (147 aa)) folds into the Globin domain. At S4 the chain carries Phosphoserine. Residue H65 participates in nitrite binding. H65 contributes to the O2 binding site. T68 is subject to Phosphothreonine. Residue H94 participates in heme b binding.

It belongs to the globin family. As to quaternary structure, monomeric.

The protein resides in the cytoplasm. It localises to the sarcoplasm. It carries out the reaction Fe(III)-heme b-[protein] + nitric oxide + H2O = Fe(II)-heme b-[protein] + nitrite + 2 H(+). The enzyme catalyses H2O2 + AH2 = A + 2 H2O. Functionally, monomeric heme protein which primary function is to store oxygen and facilitate its diffusion within muscle tissues. Reversibly binds oxygen through a pentacoordinated heme iron and enables its timely and efficient release as needed during periods of heightened demand. Depending on the oxidative conditions of tissues and cells, and in addition to its ability to bind oxygen, it also has a nitrite reductase activity whereby it regulates the production of bioactive nitric oxide. Under stress conditions, like hypoxia and anoxia, it also protects cells against reactive oxygen species thanks to its pseudoperoxidase activity. This Orcinus orca (Killer whale) protein is Myoglobin (MB).